We begin with the raw amino-acid sequence, 341 residues long: GTP 3',8-cyclase (341 aa).

The Radical SAM core domain maps to 11–231 (KRERPLRDLR…DLINQHMPTE (221 aa)). R20 contributes to the GTP binding site. [4Fe-4S] cluster-binding residues include C27 and C31. Y33 contacts S-adenosyl-L-methionine. A [4Fe-4S] cluster-binding site is contributed by C34. R75 contacts GTP. G79 contacts S-adenosyl-L-methionine. T106 contacts GTP. An S-adenosyl-L-methionine-binding site is contributed by S130. K167 contributes to the GTP binding site. M201 contributes to the S-adenosyl-L-methionine binding site. C265 and C268 together coordinate [4Fe-4S] cluster. GTP is bound at residue 270–272 (RAR). Residue C282 participates in [4Fe-4S] cluster binding.

Belongs to the radical SAM superfamily. MoaA family. As to quaternary structure, monomer and homodimer. The cofactor is [4Fe-4S] cluster.

The enzyme catalyses GTP + AH2 + S-adenosyl-L-methionine = (8S)-3',8-cyclo-7,8-dihydroguanosine 5'-triphosphate + 5'-deoxyadenosine + L-methionine + A + H(+). It participates in cofactor biosynthesis; molybdopterin biosynthesis. Catalyzes the cyclization of GTP to (8S)-3',8-cyclo-7,8-dihydroguanosine 5'-triphosphate. In Bacillus velezensis (strain DSM 23117 / BGSC 10A6 / LMG 26770 / FZB42) (Bacillus amyloliquefaciens subsp. plantarum), this protein is GTP 3',8-cyclase.